The chain runs to 364 residues: FMNH(2)-dependent dimethylsulfone monooxygenase (364 aa).

Belongs to the SsuD family.

It carries out the reaction dimethyl sulfone + FMNH2 + O2 = methanesulfinate + FMN + formaldehyde + H2O + 2 H(+). Functionally, involved in the dimethyl sulfide degradation pathway. Catalyzes the oxidation of dimethylsulfone (DMSO2) to yield methanesulfinate, which is oxidized spontaneously to methanesulfonate in the presence of dioxygen and FMNH(2). This is FMNH(2)-dependent dimethylsulfone monooxygenase from Pseudomonas fluorescens (strain Pf0-1).